A 704-amino-acid chain; its full sequence is Polyribonucleotide nucleotidyltransferase (704 aa).

Residues Asp487 and Asp493 each coordinate Mg(2+). A KH domain is found at 554–613; sequence PRLLTIKIHPDKIREVIGKGGSTIQAITKETGTQIDIQDDGTIIIASVNAIAAQAAKSRI. Residues 623 to 691 enclose the S1 motif domain; it reads GRIYEGKVAK…KQGRIRLSIK (69 aa).

The protein belongs to the polyribonucleotide nucleotidyltransferase family. Component of the RNA degradosome, which is a multiprotein complex involved in RNA processing and mRNA degradation. Mg(2+) serves as cofactor.

It is found in the cytoplasm. It carries out the reaction RNA(n+1) + phosphate = RNA(n) + a ribonucleoside 5'-diphosphate. Functionally, involved in mRNA degradation. Catalyzes the phosphorolysis of single-stranded polyribonucleotides processively in the 3'- to 5'-direction. This Xanthomonas axonopodis pv. citri (strain 306) protein is Polyribonucleotide nucleotidyltransferase.